The chain runs to 582 residues: tRNA(Ile)-lysidine synthase (582 aa).

46-51 lines the ATP pocket; it reads SGGADS. One can recognise a CMP/dCMP-type deaminase domain in the interval 402 to 525; it reads DPLHAAMGEA…DLLADHWGWR (124 aa). The interval 548–582 is disordered; that stretch reads VRRRSADTPQTPNAETPAPRSSRSTSASGKPTMLE. Residues 563 to 575 show a composition bias toward low complexity; that stretch reads TPAPRSSRSTSAS.

This sequence belongs to the tRNA(Ile)-lysidine synthase family.

The protein resides in the cytoplasm. The catalysed reaction is cytidine(34) in tRNA(Ile2) + L-lysine + ATP = lysidine(34) in tRNA(Ile2) + AMP + diphosphate + H(+). Ligates lysine onto the cytidine present at position 34 of the AUA codon-specific tRNA(Ile) that contains the anticodon CAU, in an ATP-dependent manner. Cytidine is converted to lysidine, thus changing the amino acid specificity of the tRNA from methionine to isoleucine. The sequence is that of tRNA(Ile)-lysidine synthase from Deinococcus radiodurans (strain ATCC 13939 / DSM 20539 / JCM 16871 / CCUG 27074 / LMG 4051 / NBRC 15346 / NCIMB 9279 / VKM B-1422 / R1).